We begin with the raw amino-acid sequence, 137 residues long: Partner of bursicon (137 aa).

The N-terminal stretch at 1–24 (MNIMITKIFFLVQLFYIVVSKSSA) is a signal peptide. 5 disulfides stabilise this stretch: C28–C86, C52–C101, C61–C127, C65–C129, and C83–C132. A CTCK domain is found at 28–123 (CETVASEVHV…NALMEVRLRE (96 aa)).

As to quaternary structure, heterodimer of burs and pburs.

It localises to the secreted. Final heterodimeric neurohormone released at the end of the molting cycle, involved in the sclerotization (tanning) of the insect cuticle, melanization and wing spreading. The chain is Partner of bursicon from Bombyx mori (Silk moth).